The chain runs to 257 residues: Folate receptor alpha (257 aa).

Positions 1–24 (MAQRMTTQLLLLLVWVAVVGEAQT) are cleaved as a signal peptide. Cystine bridges form between cysteine 37/cysteine 65, cysteine 57/cysteine 105, cysteine 66/cysteine 109, cysteine 89/cysteine 175, cysteine 96/cysteine 146, cysteine 135/cysteine 209, cysteine 139/cysteine 189, and cysteine 152/cysteine 169. A glycan (N-linked (GlcNAc...) asparagine) is linked at asparagine 69. Residues aspartate 103, tyrosine 107, 124–128 (WRKER), 157–162 (HKGWNW), and serine 196 each bind folate. An N-linked (GlcNAc...) asparagine glycan is attached at asparagine 161. The N-linked (GlcNAc...) asparagine glycan is linked to asparagine 201. Serine 234 carries GPI-anchor amidated serine lipidation. Positions 235–257 (GAGPWAAWPFLLSLALMLLWLLS) are cleaved as a propeptide — removed in mature form.

This sequence belongs to the folate receptor family. In terms of processing, the secreted form is derived from the membrane-bound form either by cleavage of the GPI anchor, or/and by proteolysis catalyzed by a metalloprotease. Primarily expressed in tissues of epithelial origin. Expression is increased in malignant tissues. Expressed in kidney, lung and cerebellum. Detected in placenta and thymus epithelium.

It is found in the cell membrane. It localises to the apical cell membrane. The protein localises to the basolateral cell membrane. Its subcellular location is the secreted. The protein resides in the cytoplasmic vesicle. It is found in the clathrin-coated vesicle. It localises to the endosome. Functionally, binds to folate and reduced folic acid derivatives and mediates delivery of 5-methyltetrahydrofolate and folate analogs into the interior of cells. Has high affinity for folate and folic acid analogs at neutral pH. Exposure to slightly acidic pH after receptor endocytosis triggers a conformation change that strongly reduces its affinity for folates and mediates their release. Required for normal embryonic development and normal cell proliferation. In Homo sapiens (Human), this protein is Folate receptor alpha (FOLR1).